The following is a 561-amino-acid chain: Putative transport protein YbjL (561 aa).

A run of 5 helical transmembrane segments spans residues 8–28 (LLNG…LCLG), 32–52 (LGSI…LLGQ), 66–86 (FMLF…SIFF), 94–114 (MLAL…GKLF), and 158–178 (NLSL…IVGA). RCK C-terminal domains lie at 200 to 288 (RGLD…SFRN) and 292 to 373 (VFDR…RIGF). Transmembrane regions (helical) follow at residues 383-403 (LLAF…TFQF), 406-426 (FSFG…LGFM), 451-471 (VFMA…LGAI), 475-495 (MLIA…LFGA), and 540-560 (AIAN…WPGL).

Belongs to the AAE transporter (TC 2.A.81) family. YbjL subfamily.

The protein localises to the cell membrane. The chain is Putative transport protein YbjL from Shigella flexneri.